A 100-amino-acid polypeptide reads, in one-letter code: RxLR effector protein SFI8 (100 aa).

A signal peptide spans 1 to 22 (MRSILYAVLAFAVLARSSAVAA). The RxLR-dEER motif lies at 43 to 57 (RSLRVEAQEVIQSGR). The Calmodulin-binding motif signature appears at 78–82 (KPDIK).

Belongs to the RxLR effector family. As to quaternary structure, interacts with the host calmodulin.

The protein resides in the secreted. It localises to the host nucleus. The protein localises to the host cytoplasm. In terms of biological role, effector that suppresses flg22-induced post-translational MAP kinase activation both tomato and Arabidopsis. The perception of highly conserved pathogen- or microbe-associated molecular patterns (PAMPs/MAMPs), such as flg22, triggers converging signaling pathways recruiting MAP kinase cascades and inducing transcriptional re-programming, yielding a generic antimicrobial response. Associates with calmodulin to interfere with plant defense-associated calcium signaling in hosts. This chain is RxLR effector protein SFI8, found in Phytophthora infestans (strain T30-4) (Potato late blight agent).